The sequence spans 445 residues: UDP-N-acetylmuramoylalanine--D-glutamate ligase (445 aa).

110–116 serves as a coordination point for ATP; sequence GSNGKTT.

The protein belongs to the MurCDEF family.

The protein localises to the cytoplasm. It catalyses the reaction UDP-N-acetyl-alpha-D-muramoyl-L-alanine + D-glutamate + ATP = UDP-N-acetyl-alpha-D-muramoyl-L-alanyl-D-glutamate + ADP + phosphate + H(+). It participates in cell wall biogenesis; peptidoglycan biosynthesis. Cell wall formation. Catalyzes the addition of glutamate to the nucleotide precursor UDP-N-acetylmuramoyl-L-alanine (UMA). The chain is UDP-N-acetylmuramoylalanine--D-glutamate ligase from Christiangramia forsetii (strain DSM 17595 / CGMCC 1.15422 / KT0803) (Gramella forsetii).